The sequence spans 369 residues: Phosphate-binding protein PstS 3 (369 aa).

The N-terminal stretch at 1–21 (MKLNQFGAAIGLLATGALLSG) is a signal peptide. The N-palmitoyl cysteine moiety is linked to residue cysteine 22. Cysteine 22 carries the S-diacylglycerol cysteine lipid modification. Phosphate contacts are provided by residues 55 to 57 (STA), serine 85, aspartate 103, and 190 to 192 (SGT).

The protein belongs to the PstS family. As to quaternary structure, the complex is composed of two ATP-binding proteins (PstB), two transmembrane proteins (PstC and PstA) and a solute-binding protein (PstS).

The protein localises to the cell membrane. Part of the ABC transporter complex PstSACB involved in phosphate import. This Mycobacterium leprae (strain TN) protein is Phosphate-binding protein PstS 3 (pstS2).